The following is a 131-amino-acid chain: Peptide methionine sulfoxide reductase MsrB (131 aa).

One can recognise a MsrB domain in the interval 8–130 (LDTWREELTD…NSLSLKLVPR (123 aa)). Residues cysteine 47, cysteine 50, cysteine 96, and cysteine 99 each coordinate Zn(2+). Cysteine 119 serves as the catalytic Nucleophile.

Belongs to the MsrB Met sulfoxide reductase family. Zn(2+) is required as a cofactor.

It catalyses the reaction L-methionyl-[protein] + [thioredoxin]-disulfide + H2O = L-methionyl-(R)-S-oxide-[protein] + [thioredoxin]-dithiol. The sequence is that of Peptide methionine sulfoxide reductase MsrB from Ectopseudomonas mendocina (strain ymp) (Pseudomonas mendocina).